A 393-amino-acid polypeptide reads, in one-letter code: Leucine aminopeptidase 1 (393 aa).

An N-terminal signal peptide occupies residues 1-18 (MKLSQVSALAACVPAATA). Residues 19–84 (RFVELMEADH…GSQGLRIKES (66 aa)) constitute a propeptide that is removed on maturation. Asn-176 carries an N-linked (GlcNAc...) asparagine glycan. Residues His-184, Asp-202, Glu-241, and Asp-268 each contribute to the Zn(2+) site. Cys-317 and Cys-321 form a disulfide bridge. Zn(2+) is bound at residue His-350.

Belongs to the peptidase M28 family. M28E subfamily. As to quaternary structure, monomer. The cofactor is Zn(2+).

The protein resides in the secreted. Extracellular aminopeptidase that allows assimilation of proteinaceous substrates. The chain is Leucine aminopeptidase 1 (LAP1) from Metarhizium robertsii (strain ARSEF 23 / ATCC MYA-3075) (Metarhizium anisopliae (strain ARSEF 23)).